The following is a 92-amino-acid chain: Small ribosomal subunit protein uS19c (92 aa).

It belongs to the universal ribosomal protein uS19 family.

The protein localises to the plastid. The protein resides in the chloroplast. In terms of biological role, protein S19 forms a complex with S13 that binds strongly to the 16S ribosomal RNA. The chain is Small ribosomal subunit protein uS19c from Lactuca sativa (Garden lettuce).